The primary structure comprises 90 residues: U7-theraphotoxin-Hhn1j (90 aa).

The first 19 residues, 1-19 (MKTAIFTVVLALAVFAVLS), serve as a signal peptide directing secretion. Residues 20–50 (FGWEANEKALSEEFTELIHEKEAASETEARE) constitute a propeptide that is removed on maturation. 3 disulfide bridges follow: Cys51–Cys65, Cys58–Cys70, and Cys64–Cys81.

It belongs to the neurotoxin 10 (Hwtx-1) family. 13 (Hntx-13) subfamily. In terms of tissue distribution, expressed by the venom gland.

It is found in the secreted. In terms of biological role, ion channel inhibitor. In Cyriopagopus hainanus (Chinese bird spider), this protein is U7-theraphotoxin-Hhn1j.